The primary structure comprises 432 residues: Gamma-glutamyl phosphate reductase (432 aa).

Belongs to the gamma-glutamyl phosphate reductase family.

The protein resides in the cytoplasm. It catalyses the reaction L-glutamate 5-semialdehyde + phosphate + NADP(+) = L-glutamyl 5-phosphate + NADPH + H(+). The protein operates within amino-acid biosynthesis; L-proline biosynthesis; L-glutamate 5-semialdehyde from L-glutamate: step 2/2. Its function is as follows. Catalyzes the NADPH-dependent reduction of L-glutamate 5-phosphate into L-glutamate 5-semialdehyde and phosphate. The product spontaneously undergoes cyclization to form 1-pyrroline-5-carboxylate. This chain is Gamma-glutamyl phosphate reductase, found in Corynebacterium glutamicum (strain R).